The chain runs to 195 residues: MDRTTLPYGLFGLDIDPYKEFGATVELLSFLPSDFFPSVRDLLDTASALYRESLESSDHCSPHHTALRQAILCWVELMTLATWVGNNLEDPASRDLVVNYVNTNMGLKIRQLLWFHISCLTFGRETVLEYLVSFGVWIRTPPAYRPPNAPILSTLPETTVVRRRGRSPRRRTPSPRRRRSPSPRRRRSQSRESQC.

Residues 148–195 form a disordered region; the sequence is NAPILSTLPETTVVRRRGRSPRRRTPSPRRRRSPSPRRRRSQSRESQC. The segment covering 161-188 has biased composition (basic residues); sequence VRRRGRSPRRRTPSPRRRRSPSPRRRRS. Phosphoserine; by host occurs at positions 167, 174, and 182. The stretch at 167 to 172 is one 1; half-length repeat; sequence SPRRRT. The 3 X 7 AA repeats of S-P-R-R-R-[PR]-S stretch occupies residues 167–188; sequence SPRRRTPSPRRRRSPSPRRRRS. The Bipartite nuclear localization signal motif lies at 170-187; the sequence is RRTPSPRRRRSPSPRRRR. Tandem repeats lie at residues 174 to 180 and 182 to 188. The interval 189 to 195 is RNA binding; it reads QSRESQC.

The protein belongs to the orthohepadnavirus core antigen family. Homodimerizes, then multimerizes. Interacts with cytosol exposed regions of viral L glycoprotein present in the reticulum-to-Golgi compartment. Interacts with human FLNB. Phosphorylated form interacts with host importin alpha; this interaction depends on the exposure of the NLS, which itself depends upon genome maturation and/or phosphorylation of the capsid protein. Interacts with host NUP153. Phosphorylated by host SRPK1, SRPK2, and maybe protein kinase C or GAPDH. Phosphorylation is critical for pregenomic RNA packaging. Protein kinase C phosphorylation is stimulated by HBx protein and may play a role in transport of the viral genome to the nucleus at the late step during the viral replication cycle.

The protein localises to the virion. The protein resides in the host cytoplasm. Its function is as follows. Self assembles to form an icosahedral capsid. Most capsids appear to be large particles with an icosahedral symmetry of T=4 and consist of 240 copies of capsid protein, though a fraction forms smaller T=3 particles consisting of 180 capsid proteins. Entering capsids are transported along microtubules to the nucleus. Phosphorylation of the capsid is thought to induce exposure of nuclear localization signal in the C-terminal portion of the capsid protein that allows binding to the nuclear pore complex via the importin (karyopherin-) alpha and beta. Capsids are imported in intact form through the nuclear pore into the nuclear basket, where it probably binds NUP153. Only capsids that contain the mature viral genome can release the viral DNA and capsid protein into the nucleoplasm. Immature capsids get stuck in the basket. Capsids encapsulate the pre-genomic RNA and the P protein. Pre-genomic RNA is reverse-transcribed into DNA while the capsid is still in the cytoplasm. The capsid can then either be directed to the nucleus, providing more genomes for transcription, or bud through the endoplasmic reticulum to provide new virions. In Homo sapiens (Human), this protein is Capsid protein.